Here is a 217-residue protein sequence, read N- to C-terminus: Thiamine-phosphate synthase (217 aa).

Residues 42-46 (QFRDK) and aspartate 77 contribute to the 4-amino-2-methyl-5-(diphosphooxymethyl)pyrimidine site. Residues aspartate 78 and aspartate 97 each contribute to the Mg(2+) site. A 4-amino-2-methyl-5-(diphosphooxymethyl)pyrimidine-binding site is contributed by serine 117. Residue 144–146 (TIS) participates in 2-[(2R,5Z)-2-carboxy-4-methylthiazol-5(2H)-ylidene]ethyl phosphate binding. Lysine 147 lines the 4-amino-2-methyl-5-(diphosphooxymethyl)pyrimidine pocket. 2-[(2R,5Z)-2-carboxy-4-methylthiazol-5(2H)-ylidene]ethyl phosphate-binding positions include glycine 175 and 195-196 (IT).

This sequence belongs to the thiamine-phosphate synthase family. The cofactor is Mg(2+).

It catalyses the reaction 2-[(2R,5Z)-2-carboxy-4-methylthiazol-5(2H)-ylidene]ethyl phosphate + 4-amino-2-methyl-5-(diphosphooxymethyl)pyrimidine + 2 H(+) = thiamine phosphate + CO2 + diphosphate. The enzyme catalyses 2-(2-carboxy-4-methylthiazol-5-yl)ethyl phosphate + 4-amino-2-methyl-5-(diphosphooxymethyl)pyrimidine + 2 H(+) = thiamine phosphate + CO2 + diphosphate. The catalysed reaction is 4-methyl-5-(2-phosphooxyethyl)-thiazole + 4-amino-2-methyl-5-(diphosphooxymethyl)pyrimidine + H(+) = thiamine phosphate + diphosphate. Its pathway is cofactor biosynthesis; thiamine diphosphate biosynthesis; thiamine phosphate from 4-amino-2-methyl-5-diphosphomethylpyrimidine and 4-methyl-5-(2-phosphoethyl)-thiazole: step 1/1. Functionally, condenses 4-methyl-5-(beta-hydroxyethyl)thiazole monophosphate (THZ-P) and 2-methyl-4-amino-5-hydroxymethyl pyrimidine pyrophosphate (HMP-PP) to form thiamine monophosphate (TMP). In Levilactobacillus brevis (strain ATCC 367 / BCRC 12310 / CIP 105137 / JCM 1170 / LMG 11437 / NCIMB 947 / NCTC 947) (Lactobacillus brevis), this protein is Thiamine-phosphate synthase.